Consider the following 316-residue polypeptide: Beta-agarase (316 aa).

The first 18 residues, methionine 1–alanine 18, serve as a signal peptide directing secretion. The GH16 domain maps to tyrosine 27 to glutamate 315. Substrate contacts are provided by residues tryptophan 78, glutamine 87 to phenylalanine 97, and arginine 101 to serine 103. Residue glutamate 167 is the Nucleophile of the active site. The active-site Proton donor is the glutamate 172. Arginine 197 serves as a coordination point for substrate.

Belongs to the glycosyl hydrolase 16 family.

The enzyme catalyses Hydrolysis of (1-&gt;4)-beta-D-galactosidic linkages in agarose, giving the tetramer as the predominant product.. In terms of biological role, cleaves the beta-1,4-linkages between beta-D-galactose and alpha-L-3,6-anhydro-galactose residues in agarose. Cleaves agarose in a random manner with retention of the anomeric-bond configuration, producing beta-anomers that give rise progressively to alpha-anomers when mutarotation takes place. This chain is Beta-agarase, found in Phocaeicola plebeius (strain DSM 17135 / JCM 12973 / CCUG 54634 / M2) (Bacteroides plebeius).